The chain runs to 236 residues: Large ribosomal subunit protein uL1 (236 aa).

It belongs to the universal ribosomal protein uL1 family. As to quaternary structure, part of the 50S ribosomal subunit.

Binds directly to 23S rRNA. The L1 stalk is quite mobile in the ribosome, and is involved in E site tRNA release. Its function is as follows. Protein L1 is also a translational repressor protein, it controls the translation of the L11 operon by binding to its mRNA. In Kocuria rhizophila (strain ATCC 9341 / DSM 348 / NBRC 103217 / DC2201), this protein is Large ribosomal subunit protein uL1.